The primary structure comprises 206 residues: Autophagy-related protein 33 (206 aa).

4 consecutive transmembrane segments (helical) span residues 13–35 (VSSL…AAPV), 51–71 (VGGA…FGAP), 77–97 (PYLL…AVVA), and 181–201 (AAVL…GLYG).

Belongs to the ATG33 family.

The protein localises to the mitochondrion membrane. Functionally, involved in the selective degradation of mitochondria via autophagy during starvation and at post-log phase. The protein is Autophagy-related protein 33 (ATG33) of Lachancea thermotolerans (strain ATCC 56472 / CBS 6340 / NRRL Y-8284) (Yeast).